Consider the following 430-residue polypeptide: Trigger factor (430 aa).

The 86-residue stretch at 157 to 242 (GDLVALETWS…AVEVSEPVLP (86 aa)) folds into the PPIase FKBP-type domain.

This sequence belongs to the FKBP-type PPIase family. Tig subfamily.

The protein resides in the cytoplasm. The enzyme catalyses [protein]-peptidylproline (omega=180) = [protein]-peptidylproline (omega=0). Its function is as follows. Involved in protein export. Acts as a chaperone by maintaining the newly synthesized protein in an open conformation. Functions as a peptidyl-prolyl cis-trans isomerase. This is Trigger factor from Xanthomonas oryzae pv. oryzae (strain MAFF 311018).